The sequence spans 263 residues: Purine nucleoside phosphorylase SE_0862 (263 aa).

3 residues coordinate Zn(2+): His-79, Cys-124, and His-141.

The protein belongs to the purine nucleoside phosphorylase YfiH/LACC1 family. Homodimer. Cu(2+) serves as cofactor. The cofactor is Zn(2+).

The enzyme catalyses adenosine + phosphate = alpha-D-ribose 1-phosphate + adenine. It catalyses the reaction S-methyl-5'-thioadenosine + phosphate = 5-(methylsulfanyl)-alpha-D-ribose 1-phosphate + adenine. The catalysed reaction is inosine + phosphate = alpha-D-ribose 1-phosphate + hypoxanthine. It carries out the reaction adenosine + H2O + H(+) = inosine + NH4(+). Its function is as follows. Purine nucleoside enzyme that catalyzes the phosphorolysis of adenosine and inosine nucleosides, yielding D-ribose 1-phosphate and the respective free bases, adenine and hypoxanthine. Also catalyzes the phosphorolysis of S-methyl-5'-thioadenosine into adenine and S-methyl-5-thio-alpha-D-ribose 1-phosphate. Also has adenosine deaminase activity. The protein is Purine nucleoside phosphorylase SE_0862 of Staphylococcus epidermidis (strain ATCC 12228 / FDA PCI 1200).